Reading from the N-terminus, the 5082-residue chain is Malformin synthetase mlfA (5082 aa).

The segment at 225–616 (ERHAANRPHS…CGRADTQVKL (392 aa)) is adenylation 1. Positions 749-822 (SRLEQKIQLA…EAASLAEVQE (74 aa)) constitute a Carrier 1 domain. Position 783 is an O-(pantetheine 4'-phosphoryl)serine (Ser-783). The segment at 860-1291 (ENVFPCTTMQ…ALNTLSLLQA (432 aa)) is condensation 1. The tract at residues 1319–1708 (DRWVTRQPEG…GRKDTQVKLR (390 aa)) is adenylation 2. The 78-residue stretch at 1846–1923 (TPTLELERTL…QLAAEVGEPA (78 aa)) folds into the Carrier 2 domain. Ser-1883 carries the post-translational modification O-(pantetheine 4'-phosphoryl)serine. Disordered regions lie at residues 1924–1953 (GQSA…DGVD) and 1986–2012 (GGSS…KKNA). Composition is skewed to low complexity over residues 1926–1950 (SASS…STND) and 1988–2005 (SSSN…SSSS). A condensation 2 region spans residues 2058–2473 (EDIYPATALQ…AVSCSDKETL (416 aa)). An adenylation 3 region spans residues 2496 to 2888 (RRTPHAPAVC…IGRRDGQLKL (393 aa)). Residues 3024 to 3100 (RPVTSQEHEM…QLICHLNTIR (77 aa)) form the Carrier 3 domain. At Ser-3061 the chain carries O-(pantetheine 4'-phosphoryl)serine. 2 condensation regions span residues 3117–3582 (WVAL…TYDQ) and 3603–4022 (NIYP…EHLV). The interval 4047–4426 (HNSRQAVFDD…VGRKDNQIKF (380 aa)) is adenylation 4. A Carrier 4 domain is found at 4560–4636 (MPSTAAERKM…DLSDQAKSLI (77 aa)). Ser-4597 carries the O-(pantetheine 4'-phosphoryl)serine modification. Residues 4673-5000 (DVLPTTSFQR…LQTIVQHQNN (328 aa)) form a condensation 5 region.

It belongs to the NRP synthetase family.

It functions in the pathway secondary metabolite biosynthesis. In terms of biological role, nonribosomal peptide synthetase; part of the gene cluster that mediates the biosynthesis of malformins, cyclic pentapeptides with a disulfide bond between 2 consecutive cysteins, that show potential anti-tumor as well as antimalarial and antitrypanosomal properties. The nonribosomal peptide synthetase mlfA is responsible of the formation of the cyclic pentapeptide. The malformin biosynthesis clusters in malformin-producing fungi also contain enzymes involved in the formation of the disulfide bond between the two consecutive cysteins within malformins, in addition to additional tailoring enzymes such as methyltransferases or oxidoreductases. They are also composed of up to 4 major facilitator superfamily transporters, and transcription factors probably involved in the regulation of the expression of those clusters. This chain is Malformin synthetase mlfA, found in Aspergillus luchuensis (strain CBS 106.47).